Reading from the N-terminus, the 567-residue chain is Lactase-like protein (567 aa).

Residues 1–21 (MKPVWVATLLWMLLLVPRLGA) form the signal peptide. The Extracellular portion of the chain corresponds to 23–541 (RKGSPEEASF…LLSHMQMVTE (519 aa)). N-linked (GlcNAc...) asparagine glycans are attached at residues Asn80, Asn171, and Asn245. A helical transmembrane segment spans residues 542–562 (IVVPTVCSLCVLITAVLLMLL). The Cytoplasmic portion of the chain corresponds to 563 to 567 (LRRQS).

The protein belongs to the glycosyl hydrolase 1 family. Klotho subfamily. May form dimers.

It is found in the endoplasmic reticulum membrane. Plays a role in formation of the lens suture in the eye, which is important for normal optical properties of the lens. The polypeptide is Lactase-like protein (LCTL) (Homo sapiens (Human)).